The chain runs to 382 residues: Tuliposide A-converting enzyme 2, chloroplastic (382 aa).

The transit peptide at Met-1–Thr-74 directs the protein to the chloroplast. Ser-232 (acyl-ester intermediate) is an active-site residue. Active-site charge relay system residues include Asp-324 and His-356.

The protein belongs to the AB hydrolase superfamily. Homodimer. Expressed in roots, stems, leaves, petals, stamens and pistils, but not in bulb scales.

Its subcellular location is the plastid. It localises to the chloroplast. It carries out the reaction 6-tuliposide A = tulipalin A + D-glucose. Its activity is regulated as follows. Inhibited by NaF, AgNO(3), HgCl(2), CuSO(4) and phenylmethylsulfonyl fluoride (PMSF). Functionally, lactone-forming carboxylesterases, specifically catalyzing intramolecular transesterification, but not hydrolysis. Involved in the biosynthesis of tulipalins, defensive chemicals that show antimicrobial activities against a broad range of strains of bacteria and fungi. Substrates are 6-tuliposide A &gt; 6-tuliposide B. This is Tuliposide A-converting enzyme 2, chloroplastic (TCEA2) from Tulipa gesneriana (Garden tulip).